Consider the following 328-residue polypeptide: MAVTEEEKKRNSTVEISGLRFTYPGIDGHPPPGSKPLIEDFSITLNSSDRCLLVGSNGAGKTTILKILGGKHMVEPHMVRVLGRSAFHDTGLTSSGDLCYLGGEWRRDVAFAGFEVPIQMDISAEKMIFGVAGIDPQRRDELIKVLDIDISWRLHKVSDGQRRRVQICMGLLKPFKVLLLDEITVDLDVLARADLLKFLRKECEERGATIIYATHIFDGLEDWPTHIVYVANGKLQLALPMEKVKETSKKSLMRTVESWLRKERDEERKRRKERKANGLPEFETRTEESRVTGDPARMLNNGWAAGRLHSTVAGGEDNFVLSSNRVLR.

One can recognise an ABC transporter domain in the interval 14–257 (VEISGLRFTY…SKKSLMRTVE (244 aa)). 55-62 (GSNGAGKT) is a binding site for ATP. Positions 263 to 295 (ERDEERKRRKERKANGLPEFETRTEESRVTGDP) are disordered. Positions 282 to 291 (FETRTEESRV) are enriched in basic and acidic residues.

It belongs to the ABC transporter superfamily. ABCI family.

Its subcellular location is the cytoplasm. The chain is ABC transporter I family member 20 (ABCI20) from Arabidopsis thaliana (Mouse-ear cress).